Reading from the N-terminus, the 265-residue chain is ClpXP adapter protein SpxH (265 aa).

This sequence belongs to the SpxH family. As to quaternary structure, interacts with Spx.

The protein localises to the cytoplasm. Functionally, adapter protein required for efficient degradation of Spx by ClpXP under non-stress conditions. Interaction with Spx stabilizes Spx and exposes the C-terminus of Spx for recognition and proteolysis by ClpXP. This Staphylococcus epidermidis (strain ATCC 35984 / DSM 28319 / BCRC 17069 / CCUG 31568 / BM 3577 / RP62A) protein is ClpXP adapter protein SpxH.